The chain runs to 137 residues: Ribonuclease VapC18 (137 aa).

In terms of domain architecture, PINc spans 4 to 126; the sequence is CVDTSAWHHA…YDRVAAITGQ (123 aa). Positions 6 and 96 each coordinate Mg(2+).

It belongs to the PINc/VapC protein family. The cofactor is Mg(2+).

Functionally, toxic component of a type II toxin-antitoxin (TA) system. An RNase. The cognate antitoxin is VapB18. In Mycobacterium tuberculosis (strain ATCC 25618 / H37Rv), this protein is Ribonuclease VapC18.